Here is a 383-residue protein sequence, read N- to C-terminus: Protein COS5 (383 aa).

The Cytoplasmic segment spans residues 1–42; the sequence is MKENELKNEKSVDVLSFKQLESQKIVLPQDLFRSSFTWFCYE. The chain crosses the membrane as a helical span at residues 43 to 63; that stretch reads IYKSLAFPIWMLLWLPLSVWW. At 64–72 the chain is on the extracellular side; that stretch reads KLSNNCIYP. A helical transmembrane segment spans residues 73–93; the sequence is LIVSLLVLFLGPIFVLVICGL. Residues 94-232 are Cytoplasmic-facing; it reads SRKRSLSKQL…RSKLTWFLKR (139 aa). A helical transmembrane segment spans residues 233 to 253; that stretch reads IFTIYSLPLWLAFLNCICVSQ. His-254 is a topological domain (extracellular). The chain crosses the membrane as a helical span at residues 255 to 275; the sequence is FCLAFRILCPGLFFLMMVWLF. Over 276-383 the chain is Cytoplasmic; that stretch reads QNMRTTALLV…SRNEESLMKK (108 aa).

This sequence belongs to the DUP/COS family.

The protein resides in the membrane. The polypeptide is Protein COS5 (COS5) (Saccharomyces cerevisiae (strain ATCC 204508 / S288c) (Baker's yeast)).